Consider the following 514-residue polypeptide: Serine--tRNA ligase, cytoplasmic (514 aa).

M1 carries the post-translational modification N-acetylmethionine. Residues 9-61 (RVDKGGDPALIRETQEKRFKDPGLVDQLVKADSEWRRCRFRADNLNKLKNLCS) form an interaction with tRNA region. Position 241 is a phosphoserine (S241). L-serine contacts are provided by T271 and R302. Residues 302–304 (RQE) and 318–321 (VHQF) each bind ATP. N6-acetyllysine is present on K323. L-serine is bound at residue E325. An ATP-binding site is contributed by 391–394 (ELVS). N427 serves as a coordination point for L-serine. The segment at 471–514 (VKPAPIDQEPSKKQKKQHEGSKKKAAARDVALESRLQNMEVTDA) is disordered. Basic and acidic residues predominate over residues 479-502 (EPSKKQKKQHEGSKKKAAARDVAL). The short motif at 482-494 (KKQKKQHEGSKKK) is the Nuclear localization signal element. Positions 505-514 (RLQNMEVTDA) are enriched in polar residues.

Belongs to the class-II aminoacyl-tRNA synthetase family. Type-1 seryl-tRNA synthetase subfamily. As to quaternary structure, homodimer. The tRNA molecule may bind across the dimer. Interacts with SIRT2. Interacts with METTL6; interaction is required for the tRNA N(3)-methylcytidine methyltransferase activity of METTL6.

The protein resides in the cytoplasm. The protein localises to the nucleus. It catalyses the reaction tRNA(Ser) + L-serine + ATP = L-seryl-tRNA(Ser) + AMP + diphosphate + H(+). The enzyme catalyses tRNA(Sec) + L-serine + ATP = L-seryl-tRNA(Sec) + AMP + diphosphate + H(+). It functions in the pathway aminoacyl-tRNA biosynthesis; selenocysteinyl-tRNA(Sec) biosynthesis; L-seryl-tRNA(Sec) from L-serine and tRNA(Sec): step 1/1. Functionally, catalyzes the attachment of serine to tRNA(Ser) in a two-step reaction: serine is first activated by ATP to form Ser-AMP and then transferred to the acceptor end of tRNA(Ser). Is probably also able to aminoacylate tRNA(Sec) with serine, to form the misacylated tRNA L-seryl-tRNA(Sec), which will be further converted into selenocysteinyl-tRNA(Sec). In the nucleus, binds to the VEGFA core promoter and prevents MYC binding and transcriptional activation by MYC. Recruits SIRT2 to the VEGFA promoter, promoting deacetylation of histone H4 at 'Lys-16' (H4K16). Thereby, inhibits the production of VEGFA and sprouting angiogenesis mediated by VEGFA. This is Serine--tRNA ligase, cytoplasmic (SARS1) from Macaca fascicularis (Crab-eating macaque).